The sequence spans 511 residues: V-type proton ATPase subunit B, brain isoform (511 aa).

Residue arginine 400 participates in ATP binding.

This sequence belongs to the ATPase alpha/beta chains family. V-ATPase is a heteromultimeric enzyme made up of two complexes: the ATP-hydrolytic V1 complex and the proton translocation V0 complex. The V1 complex consists of three catalytic AB heterodimers that form a heterohexamer, three peripheral stalks each consisting of EG heterodimers, one central rotor including subunits D and F, and the regulatory subunits C and H. The proton translocation complex V0 consists of the proton transport subunit a, a ring of proteolipid subunits c9c'', rotary subunit d, subunits e and f, and the accessory subunits ATP6AP1/Ac45 and ATP6AP2/PRR. Expressed in brain (at protein level). Expressed in all tissues tested, but highest in brain and in adrenal medulla.

Its subcellular location is the apical cell membrane. It is found in the melanosome. It localises to the cytoplasm. The protein resides in the cytoplasmic vesicle. The protein localises to the clathrin-coated vesicle membrane. Its subcellular location is the secretory vesicle. It is found in the synaptic vesicle membrane. Its function is as follows. Non-catalytic subunit of the V1 complex of vacuolar(H+)-ATPase (V-ATPase), a multisubunit enzyme composed of a peripheral complex (V1) that hydrolyzes ATP and a membrane integral complex (V0) that translocates protons. V-ATPase is responsible for acidifying and maintaining the pH of intracellular compartments and in some cell types, is targeted to the plasma membrane, where it is responsible for acidifying the extracellular environment. In renal intercalated cells, can partially compensate the lack of ATP6V1B1 and mediate secretion of protons (H+) into the urine under base-line conditions but not in conditions of acid load. The sequence is that of V-type proton ATPase subunit B, brain isoform (ATP6V1B2) from Bos taurus (Bovine).